A 945-amino-acid polypeptide reads, in one-letter code: Oxysterol-binding protein homolog C23H4.01c (945 aa).

The GOLD domain occupies 1–131 (METVEIRSKS…PKTVTFLLTA (131 aa)). A PH domain is found at 149–243 (KQIISGTLLK…WCNALEKAKN (95 aa)). Serine 288, serine 419, and serine 421 each carry phosphoserine. 2 disordered regions span residues 396–555 (ESGA…LPHS) and 846–894 (LEKD…MEEK). The segment covering 443–454 (TSSISDTSSNSS) has biased composition (low complexity). Positions 460–470 (LNATSLASTVD) are enriched in polar residues. Positions 482–499 (ESNKENDIKRKQPFHDLM) are enriched in basic and acidic residues. Serine 503 carries the phosphoserine modification.

The protein belongs to the OSBP family.

The protein localises to the cytoplasm. The polypeptide is Oxysterol-binding protein homolog C23H4.01c (Schizosaccharomyces pombe (strain 972 / ATCC 24843) (Fission yeast)).